Here is a 440-residue protein sequence, read N- to C-terminus: tRNA-2-methylthio-N(6)-dimethylallyladenosine synthase (440 aa).

Residues 4-122 form the MTTase N-terminal domain; that stretch reads KSYYIITHGC…LPKILERVFE (119 aa). 6 residues coordinate [4Fe-4S] cluster: Cys-13, Cys-49, Cys-83, Cys-159, Cys-163, and Cys-166. In terms of domain architecture, Radical SAM core spans 145 to 375; that stretch reads REPGVRAWVT…IELQNGISLE (231 aa). The 63-residue stretch at 378–440 folds into the TRAM domain; the sequence is KNEEGNIHEI…KLFHLEGVLV (63 aa).

It belongs to the methylthiotransferase family. MiaB subfamily. As to quaternary structure, monomer. [4Fe-4S] cluster serves as cofactor.

It localises to the cytoplasm. It carries out the reaction N(6)-dimethylallyladenosine(37) in tRNA + (sulfur carrier)-SH + AH2 + 2 S-adenosyl-L-methionine = 2-methylsulfanyl-N(6)-dimethylallyladenosine(37) in tRNA + (sulfur carrier)-H + 5'-deoxyadenosine + L-methionine + A + S-adenosyl-L-homocysteine + 2 H(+). In terms of biological role, catalyzes the methylthiolation of N6-(dimethylallyl)adenosine (i(6)A), leading to the formation of 2-methylthio-N6-(dimethylallyl)adenosine (ms(2)i(6)A) at position 37 in tRNAs that read codons beginning with uridine. This Carboxydothermus hydrogenoformans (strain ATCC BAA-161 / DSM 6008 / Z-2901) protein is tRNA-2-methylthio-N(6)-dimethylallyladenosine synthase.